A 155-amino-acid chain; its full sequence is UPF0461 protein C5orf24 homolog (155 aa).

Polar residues predominate over residues 60 to 69 (NETHLQTSTS). The tract at residues 60-155 (NETHLQTSTS…QQALMCSSDA (96 aa)) is disordered. Positions 78–92 (LKKKKNVGRSGKRGR) are enriched in basic residues. A compositionally biased stretch (polar residues) spans 94–107 (SGTTKSAGYRTSTG).

Belongs to the UPF0461 family.

The polypeptide is UPF0461 protein C5orf24 homolog (Xenopus laevis (African clawed frog)).